The chain runs to 504 residues: MANANSPKSSTPLGEGVPPRVRFCPSPTGNPHVGLVRTALFNWAFARHTGGTFVFRIEDTDAARDSEESYEQLLDSLRWLGFDWDEGPGVGGPHAPYRQSQRMDLYKDVAQKLLDGGYAYHCYCSTEELDTRRDAARAAGKPSGYDGHCRELSAEQKAAYEAEGRTPIVRFRMPDEPITFTDLVRGDITYLPENVPDYGIVRANGAPLYTLVNPVDDALMEITHVLRGEDLLSSTPRQVALYRALIELGIAKSVPEFGHLPYVMGEGNKKLSKRDPQASLNLYRERGFLPEGLLNYLSLLGWSLSADRDIFTIDEMVAAFDVKDVNPNPARFDLKKCEAINADHIRLLDVKDFTERCRPWLKAPFANWAPEDFDEAKWQVIAPYAQSRLKVLSEITDNVDFLFLPEPVFDEASWTKAMKEGSDALLRTAREKLEAADWTSPESLKEAVLAAGEEHGLKLGKAQAPVRVAVTGRTVGLPLFESLEILGKEKTLARVDAALAKLTA.

The short motif at 25–35 (PSPTGNPHVGL) is the 'HIGH' region element. Zn(2+) contacts are provided by Cys-122, Cys-124, Cys-149, and Glu-151. The 'KMSKS' region signature appears at 270 to 274 (KLSKR). Lys-273 provides a ligand contact to ATP.

The protein belongs to the class-I aminoacyl-tRNA synthetase family. Glutamate--tRNA ligase type 1 subfamily. In terms of assembly, monomer. Requires Zn(2+) as cofactor.

The protein localises to the cytoplasm. It catalyses the reaction tRNA(Glu) + L-glutamate + ATP = L-glutamyl-tRNA(Glu) + AMP + diphosphate. In terms of biological role, catalyzes the attachment of glutamate to tRNA(Glu) in a two-step reaction: glutamate is first activated by ATP to form Glu-AMP and then transferred to the acceptor end of tRNA(Glu). In Streptomyces avermitilis (strain ATCC 31267 / DSM 46492 / JCM 5070 / NBRC 14893 / NCIMB 12804 / NRRL 8165 / MA-4680), this protein is Glutamate--tRNA ligase.